We begin with the raw amino-acid sequence, 197 residues long: GTP cyclohydrolase-2 (197 aa).

Position 50–54 (50–54) interacts with GTP; that stretch reads RIHSE. Zn(2+) is bound by residues Cys-55, Cys-66, and Cys-68. Residues Gln-71, 93–95, and Thr-115 contribute to the GTP site; that span reads EGR. The Proton acceptor role is filled by Asp-127. Arg-129 serves as the catalytic Nucleophile. Residues Thr-150 and Lys-155 each coordinate GTP.

The protein belongs to the GTP cyclohydrolase II family. Zn(2+) serves as cofactor.

It carries out the reaction GTP + 4 H2O = 2,5-diamino-6-hydroxy-4-(5-phosphoribosylamino)-pyrimidine + formate + 2 phosphate + 3 H(+). Its pathway is cofactor biosynthesis; riboflavin biosynthesis; 5-amino-6-(D-ribitylamino)uracil from GTP: step 1/4. Functionally, catalyzes the conversion of GTP to 2,5-diamino-6-ribosylamino-4(3H)-pyrimidinone 5'-phosphate (DARP), formate and pyrophosphate. The polypeptide is GTP cyclohydrolase-2 (Neisseria gonorrhoeae (strain ATCC 700825 / FA 1090)).